Consider the following 547-residue polypeptide: Probable bifunctional tRNA threonylcarbamoyladenosine biosynthesis protein (547 aa).

Positions 1 to 329 (MKKTFILGIE…FRTDDVKVTW (329 aa)) are kae1. Fe cation contacts are provided by H113, H117, and Y134. Residues 134–138 (YVSGA), D166, G179, E183, and N262 contribute to the L-threonylcarbamoyladenylate site. Position 290 (D290) interacts with Fe cation. Positions 340-547 (EISPETFFRM…EEIKKRARYA (208 aa)) constitute a Protein kinase domain. Residues 355–363 (LDNGAEAVV) and K377 each bind ATP. D464 (proton acceptor; for kinase activity) is an active-site residue.

In the N-terminal section; belongs to the KAE1 / TsaD family. It in the C-terminal section; belongs to the protein kinase superfamily. Tyr protein kinase family. BUD32 subfamily. In terms of assembly, component of the KEOPS complex that consists of Kae1, Bud32, Cgi121 and Pcc1; the whole complex dimerizes. It depends on Fe(2+) as a cofactor.

The protein localises to the cytoplasm. The enzyme catalyses L-seryl-[protein] + ATP = O-phospho-L-seryl-[protein] + ADP + H(+). The catalysed reaction is L-threonyl-[protein] + ATP = O-phospho-L-threonyl-[protein] + ADP + H(+). It catalyses the reaction L-threonylcarbamoyladenylate + adenosine(37) in tRNA = N(6)-L-threonylcarbamoyladenosine(37) in tRNA + AMP + H(+). Its function is as follows. Required for the formation of a threonylcarbamoyl group on adenosine at position 37 (t(6)A37) in tRNAs that read codons beginning with adenine. Is a component of the KEOPS complex that is probably involved in the transfer of the threonylcarbamoyl moiety of threonylcarbamoyl-AMP (TC-AMP) to the N6 group of A37. The Kae1 domain likely plays a direct catalytic role in this reaction. The Bud32 domain probably displays kinase activity that regulates Kae1 function. The sequence is that of Probable bifunctional tRNA threonylcarbamoyladenosine biosynthesis protein from Methanosarcina mazei (strain ATCC BAA-159 / DSM 3647 / Goe1 / Go1 / JCM 11833 / OCM 88) (Methanosarcina frisia).